The chain runs to 179 residues: Large ribosomal subunit protein uL5 (179 aa).

This sequence belongs to the universal ribosomal protein uL5 family. Part of the 50S ribosomal subunit; part of the 5S rRNA/L5/L18/L25 subcomplex. Contacts the 5S rRNA and the P site tRNA. Forms a bridge to the 30S subunit in the 70S ribosome.

Its function is as follows. This is one of the proteins that bind and probably mediate the attachment of the 5S RNA into the large ribosomal subunit, where it forms part of the central protuberance. In the 70S ribosome it contacts protein S13 of the 30S subunit (bridge B1b), connecting the 2 subunits; this bridge is implicated in subunit movement. Contacts the P site tRNA; the 5S rRNA and some of its associated proteins might help stabilize positioning of ribosome-bound tRNAs. In Dichelobacter nodosus (strain VCS1703A), this protein is Large ribosomal subunit protein uL5.